The chain runs to 67 residues: Large ribosomal subunit protein uL29 (67 aa).

This sequence belongs to the universal ribosomal protein uL29 family.

The protein is Large ribosomal subunit protein uL29 (rpmC) of Halalkalibacterium halodurans (strain ATCC BAA-125 / DSM 18197 / FERM 7344 / JCM 9153 / C-125) (Bacillus halodurans).